The primary structure comprises 171 residues: uncharacterized protein (171 aa).

The chain crosses the membrane as a helical span at residues glycine 21–alanine 43.

It localises to the membrane. This is an uncharacterized protein from Archaeoglobus fulgidus (strain ATCC 49558 / DSM 4304 / JCM 9628 / NBRC 100126 / VC-16).